Here is a 166-residue protein sequence, read N- to C-terminus: Protein-export protein SecB (166 aa).

Belongs to the SecB family. As to quaternary structure, homotetramer, a dimer of dimers. One homotetramer interacts with 1 SecA dimer.

The protein localises to the cytoplasm. One of the proteins required for the normal export of preproteins out of the cell cytoplasm. It is a molecular chaperone that binds to a subset of precursor proteins, maintaining them in a translocation-competent state. It also specifically binds to its receptor SecA. This is Protein-export protein SecB from Cereibacter sphaeroides (strain ATCC 17025 / ATH 2.4.3) (Rhodobacter sphaeroides).